The following is a 590-amino-acid chain: Methionine--tRNA ligase, mitochondrial (590 aa).

Residues Met1 to Ala26 constitute a mitochondrion transit peptide. The 'HIGH' region signature appears at Phe51–His61. Residues Lys342 to Ser346 carry the 'KMSKS' region motif. Residue Lys345 coordinates ATP. Positions Leu570–Lys590 are disordered. The span at Glu571 to Lys590 shows a compositional bias: basic and acidic residues.

It belongs to the class-I aminoacyl-tRNA synthetase family.

The protein localises to the mitochondrion matrix. It carries out the reaction tRNA(Met) + L-methionine + ATP = L-methionyl-tRNA(Met) + AMP + diphosphate. The polypeptide is Methionine--tRNA ligase, mitochondrial (mars2) (Takifugu rubripes (Japanese pufferfish)).